A 612-amino-acid polypeptide reads, in one-letter code: Proton channel OTOP1 (612 aa).

The span at 1–46 (MLEGLGSPASPRAAASASVAGSSGPAACSPPSSSAPRSPESPAPRR) shows a compositional bias: low complexity. The segment at 1–50 (MLEGLGSPASPRAAASASVAGSSGPAACSPPSSSAPRSPESPAPRRGGVR) is disordered. Residues 1-58 (MLEGLGSPASPRAAASASVAGSSGPAACSPPSSSAPRSPESPAPRRGGVRASVPQKLA) lie on the Cytoplasmic side of the membrane. Residues 59-80 (EMLSSQYGLIVFVAGLLLLLAW) traverse the membrane as a helical segment. Over 81 to 88 (AVHAAGVS) the chain is Extracellular. The chain crosses the membrane as a helical span at residues 89-112 (KSDLLCFLTALMLLQLLWMLWYVG). At 113 to 130 (RSSAHRRLFRLKDTHAGA) the chain is on the cytoplasmic side. The helical transmembrane segment at 131–153 (GWLRGSITLFAVITVILGCLKIG) threads the bilayer. Residues 154 to 163 (YFIGFSECLS) are Extracellular-facing. The helical transmembrane segment at 164 to 188 (ATEGVFPVTHSVHTLLQVYFLWGHA) threads the bilayer. Over 189 to 196 (KDIIQSFK) the chain is Cytoplasmic. The chain crosses the membrane as a helical span at residues 197 to 223 (TLERFGVIHSVFTNLLLWANGVLNESK). The Extracellular portion of the chain corresponds to 224–264 (HQLNEHKERLITLGFGNITTVLDDHTPQCNCTPPTLCTAIS). Residues 265 to 290 (HGIYYLYPFNIEYQILASTMLYVLWK) traverse the membrane as a helical segment. Residues 291-311 (NIGRKVDSHQHQKMQFKSDGV) lie on the Cytoplasmic side of the membrane. The helical transmembrane segment at 312–334 (MVGAVLGLTVLAATIAVVVVYLI) threads the bilayer. The Extracellular segment spans residues 335 to 344 (HIGRSKTKSE). Residues 345 to 370 (SALIMFYLYAITLLMLMGAAGLAGIR) traverse the membrane as a helical segment. At 371–388 (IYRIDEKSLDESKNPARK) the chain is on the cytoplasmic side. The chain crosses the membrane as a helical span at residues 389 to 413 (LDSDLLVGTASGSWLISWGSILAIL). The Extracellular portion of the chain corresponds to 414–423 (CAEGHPRYTW). A helical transmembrane segment spans residues 424-444 (YNLPYSILAIVEKYIQNLFIF). Residues 445-544 (ESIHREPEKL…QGNAKRKVLR (100 aa)) are Cytoplasmic-facing. A disordered region spans residues 499–525 (ANGNVCMRESHDKEEEKQEESSWGGSP). Residues 506-518 (RESHDKEEEKQEE) are compositionally biased toward basic and acidic residues. Residues 545 to 563 (NIAAFLFLCNISLWIPPAF) traverse the membrane as a helical segment. Over 564–581 (GCRPEYDNGLEEIVFGFE) the chain is Extracellular. Residues 582-605 (PWIIVVNLAMPFSIFYRMHAAASL) form a helical membrane-spanning segment. Topologically, residues 606 to 612 (FEVYCKI) are cytoplasmic.

The protein belongs to the otopetrin family. In terms of assembly, homodimer. Interacts with STAT1, independently of STAT1 phosphorylation status.

Its subcellular location is the cell membrane. It is found in the cell projection. It localises to the microvillus. It carries out the reaction H(+)(in) = H(+)(out). Activated by both acid and alkali, with proton influx in response to extracellular acid and proton efflux during alkali stimulation. Inhibited by Zn(2+); this inhibition is thought to be pH-sensitive. Currents evoked in response to mild acid (pH 6.0) stimulus may also be mildly potentiated by exposure to Zn(2+). Activated by NH(4)Cl. Its function is as follows. Proton-selective ion channel. Biphasically modulated by acid and alkali, mediating proton influx and efflux in response to extracellular acid and base stimulation, respectively. Sour taste receptor, which carries inward currents in response to extracellular acidification. Sensor for ammonium chloride (NH(4)Cl) in taste receptor cells. NH(4)Cl acts by increasing the intracellular pH, thereby generating a driving force for proton entry through OTOP1 channel. Might also participate in alkaline sensation. Plays a role in the regulation of Ca(2+) flux in response to purigenic (ATP, ADP and UDP) stimuli, leading to increase in cytosolic Ca(2+) due to influx of extracellular calcium. May play this role by inhibiting P2Y purinoceptor-mediated Ca(2+) release in a Ca(2+)-dependent manner and promote an influx of Ca(2+) in response to ATP. Through this mechanism and possibly others, plays a role in the formation and function of calcium carbonate-based structures in the vestibular system of the inner ear, called otoconia, that sense gravity and linear acceleration. In obesity, may attenuate adipose tissue inflammation, through the negative regulation of IFNG signaling, hence may play an adaptive role in the maintainance of metabolic homeostasis. Following alkali activation, may also be permeable Na(+), K(+), Cs(+) and Li(+). This chain is Proton channel OTOP1, found in Homo sapiens (Human).